We begin with the raw amino-acid sequence, 1008 residues long: CRAL-TRIO domain-containing protein C23B6.04c (1008 aa).

Disordered stretches follow at residues Met-1 to Glu-247, Asp-284 to Ser-306, and Gln-374 to Lys-514. Residues Thr-79 to Thr-110 show a composition bias toward polar residues. Basic and acidic residues-rich tracts occupy residues Arg-111–Ala-131 and Met-170–Leu-187. Composition is skewed to polar residues over residues Gln-374–Asn-389, Asp-397–Lys-432, Gly-467–Ser-478, and Gly-495–Asn-505. Residues Ser-525 and Ser-559 each carry the phosphoserine modification. Positions Glu-675–Tyr-828 constitute a CRAL-TRIO domain. Positions Ser-883 to Pro-982 are disordered. The segment covering Thr-885 to Thr-899 has biased composition (low complexity). Residues Ser-888 and Ser-890 each carry the phosphoserine modification. A compositionally biased stretch (basic and acidic residues) spans Ser-914–Gly-931.

It is found in the cell membrane. This Schizosaccharomyces pombe (strain 972 / ATCC 24843) (Fission yeast) protein is CRAL-TRIO domain-containing protein C23B6.04c.